A 438-amino-acid polypeptide reads, in one-letter code: Probable tRNA pseudouridine synthase D (438 aa).

The active-site Nucleophile is the D86. The TRUD domain maps to 165 to 390 (GVPNFFGIQR…SKGTRREVLL (226 aa)).

This sequence belongs to the pseudouridine synthase TruD family.

The catalysed reaction is uridine(13) in tRNA = pseudouridine(13) in tRNA. Could be responsible for synthesis of pseudouridine from uracil-13 in transfer RNAs. In Methanosarcina mazei (strain ATCC BAA-159 / DSM 3647 / Goe1 / Go1 / JCM 11833 / OCM 88) (Methanosarcina frisia), this protein is Probable tRNA pseudouridine synthase D.